Reading from the N-terminus, the 697-residue chain is Potassium-transporting ATPase ATP-binding subunit (697 aa).

4 helical membrane passes run P55–S75, S79–A99, L245–F265, and V271–I291. D324 (4-aspartylphosphate intermediate) is an active-site residue. Residues D361, E365, F393–S400, and K412 contribute to the ATP site. Residues D535 and D539 each coordinate Mg(2+). Helical transmembrane passes span F605–M625, A633–M653, and G677–I697.

Belongs to the cation transport ATPase (P-type) (TC 3.A.3) family. Type IA subfamily. In terms of assembly, the system is composed of three essential subunits: KdpA, KdpB and KdpC.

The protein resides in the cell membrane. It catalyses the reaction K(+)(out) + ATP + H2O = K(+)(in) + ADP + phosphate + H(+). Functionally, part of the high-affinity ATP-driven potassium transport (or Kdp) system, which catalyzes the hydrolysis of ATP coupled with the electrogenic transport of potassium into the cytoplasm. This subunit is responsible for energy coupling to the transport system and for the release of the potassium ions to the cytoplasm. The polypeptide is Potassium-transporting ATPase ATP-binding subunit (Bacillus cereus (strain B4264)).